A 156-amino-acid chain; its full sequence is SsrA-binding protein (156 aa).

It belongs to the SmpB family.

Its subcellular location is the cytoplasm. Its function is as follows. Required for rescue of stalled ribosomes mediated by trans-translation. Binds to transfer-messenger RNA (tmRNA), required for stable association of tmRNA with ribosomes. tmRNA and SmpB together mimic tRNA shape, replacing the anticodon stem-loop with SmpB. tmRNA is encoded by the ssrA gene; the 2 termini fold to resemble tRNA(Ala) and it encodes a 'tag peptide', a short internal open reading frame. During trans-translation Ala-aminoacylated tmRNA acts like a tRNA, entering the A-site of stalled ribosomes, displacing the stalled mRNA. The ribosome then switches to translate the ORF on the tmRNA; the nascent peptide is terminated with the 'tag peptide' encoded by the tmRNA and targeted for degradation. The ribosome is freed to recommence translation, which seems to be the essential function of trans-translation. This Clostridium botulinum (strain Loch Maree / Type A3) protein is SsrA-binding protein.